The primary structure comprises 193 residues: ATP-dependent Clp protease proteolytic subunit 1 (193 aa).

Residue Ser98 is the Nucleophile of the active site. Residue His123 is part of the active site.

It belongs to the peptidase S14 family. Fourteen ClpP subunits assemble into 2 heptameric rings which stack back to back to give a disk-like structure with a central cavity, resembling the structure of eukaryotic proteasomes.

It localises to the cytoplasm. It catalyses the reaction Hydrolysis of proteins to small peptides in the presence of ATP and magnesium. alpha-casein is the usual test substrate. In the absence of ATP, only oligopeptides shorter than five residues are hydrolyzed (such as succinyl-Leu-Tyr-|-NHMec, and Leu-Tyr-Leu-|-Tyr-Trp, in which cleavage of the -Tyr-|-Leu- and -Tyr-|-Trp bonds also occurs).. In terms of biological role, cleaves peptides in various proteins in a process that requires ATP hydrolysis. Has a chymotrypsin-like activity. Plays a major role in the degradation of misfolded proteins. This Bacillus cereus (strain ATCC 10987 / NRS 248) protein is ATP-dependent Clp protease proteolytic subunit 1.